We begin with the raw amino-acid sequence, 817 residues long: LisH domain-containing protein ARMC9 (817 aa).

Residues 15 to 47 form the LisH domain; the sequence is SESDLLSMISEYLKFGEFEETARTFEKEVKRKG. Disordered stretches follow at residues 580 to 605, 610 to 629, and 642 to 817; these read SATIPEQEPESDDEEDEDDDDDEEDV, LDKEEVLQPQPKELSGESLL, and KTKR…SNRK. Acidic residues predominate over residues 586-605; the sequence is QEPESDDEEDEDDDDDEEDV. 2 stretches are compositionally biased toward polar residues: residues 692–715 and 740–750; these read SSRPATRTGSRPSTAESIHQTLAT and GQTTNSVQSYS. The segment covering 805 to 817 has biased composition (low complexity); sequence GRPSQQSSQSNRK.

Expressed in multiple CNS regions, including the cerebellum, all periventricular regions, and all layers of the retina.

The protein resides in the cytoplasm. It is found in the cytoskeleton. The protein localises to the cilium basal body. Its subcellular location is the cell projection. It localises to the cilium. The protein resides in the microtubule organizing center. It is found in the centrosome. The protein localises to the centriole. Involved in ciliogenesis. It is required for appropriate acetylation and polyglutamylation of ciliary microtubules, and regulation of cilium length. Acts as a positive regulator of hedgehog (Hh) signaling. The polypeptide is LisH domain-containing protein ARMC9 (armc9) (Danio rerio (Zebrafish)).